Reading from the N-terminus, the 118-residue chain is Heavy metal-associated isoprenylated plant protein 12 (118 aa).

The region spanning 1-65 is the HMA domain; it reads MQVVVLKLDV…KICHTEFISV (65 aa). The tract at residues 68-87 is disordered; the sequence is VKEPEKKKPDDPKKPETKPP. Residues 69–86 show a composition bias toward basic and acidic residues; the sequence is KEPEKKKPDDPKKPETKP. The residue at position 115 (Cys-115) is a Cysteine methyl ester. Cys-115 is lipidated: S-farnesyl cysteine. The propeptide at 116–118 is removed in mature form; that stretch reads VTS.

This sequence belongs to the HIPP family.

In terms of biological role, probable heavy-metal-binding protein. The sequence is that of Heavy metal-associated isoprenylated plant protein 12 from Arabidopsis thaliana (Mouse-ear cress).